Consider the following 475-residue polypeptide: Adenosylhomocysteinase (475 aa).

Substrate is bound by residues Thr-60, Asp-133, and Glu-198. 199-201 is a binding site for NAD(+); the sequence is TTT. Substrate is bound by residues Lys-228 and Asp-232. NAD(+) is bound by residues Asn-233, 262 to 267, Glu-285, Asn-320, 341 to 343, and Asn-389; these read GYGDVG and IGH.

This sequence belongs to the adenosylhomocysteinase family. NAD(+) serves as cofactor.

The protein localises to the cytoplasm. It carries out the reaction S-adenosyl-L-homocysteine + H2O = L-homocysteine + adenosine. It functions in the pathway amino-acid biosynthesis; L-homocysteine biosynthesis; L-homocysteine from S-adenosyl-L-homocysteine: step 1/1. Functionally, may play a key role in the regulation of the intracellular concentration of adenosylhomocysteine. The protein is Adenosylhomocysteinase of Syntrophotalea carbinolica (strain DSM 2380 / NBRC 103641 / GraBd1) (Pelobacter carbinolicus).